We begin with the raw amino-acid sequence, 475 residues long: Sulfate adenylyltransferase subunit 1 (475 aa).

The 216-residue stretch at K25 to L240 folds into the tr-type G domain. A G1 region spans residues G34–S41. G34–S41 contacts GTP. Residues G92 to D96 form a G2 region. A G3 region spans residues D113–G116. Residues D113 to H117 and N168 to D171 each bind GTP. Positions N168–D171 are G4. The interval S206–L208 is G5.

This sequence belongs to the TRAFAC class translation factor GTPase superfamily. Classic translation factor GTPase family. CysN/NodQ subfamily. In terms of assembly, heterodimer composed of CysD, the smaller subunit, and CysN.

The catalysed reaction is sulfate + ATP + H(+) = adenosine 5'-phosphosulfate + diphosphate. The protein operates within sulfur metabolism; hydrogen sulfide biosynthesis; sulfite from sulfate: step 1/3. Functionally, with CysD forms the ATP sulfurylase (ATPS) that catalyzes the adenylation of sulfate producing adenosine 5'-phosphosulfate (APS) and diphosphate, the first enzymatic step in sulfur assimilation pathway. APS synthesis involves the formation of a high-energy phosphoric-sulfuric acid anhydride bond driven by GTP hydrolysis by CysN coupled to ATP hydrolysis by CysD. In Sodalis glossinidius (strain morsitans), this protein is Sulfate adenylyltransferase subunit 1.